The following is a 150-amino-acid chain: Troponin C, isoform 2B (150 aa).

Methionine 1 carries the N-acetylmethionine modification. EF-hand domains follow at residues 7 to 42, 43 to 78, 83 to 118, and 119 to 150; these read EQLS…MGVK, ISEK…FLIE, ALKA…LDNR, and LTEE…MMNG. 5 residues coordinate Ca(2+): aspartate 56, aspartate 58, serine 60, glutamate 62, and glutamate 67. Ca(2+) is bound by residues aspartate 132, aspartate 134, serine 136, threonine 138, and glutamate 143.

It belongs to the troponin C family.

Its function is as follows. Troponin is the central regulatory protein of striated muscle contraction. Tn consists of three components: Tn-I which is the inhibitor of actomyosin ATPase, Tn-T which contains the binding site for tropomyosin and Tn-C. The binding of calcium to Tn-C abolishes the inhibitory action of Tn on actin filaments. This Homarus americanus (American lobster) protein is Troponin C, isoform 2B.